Reading from the N-terminus, the 467-residue chain is ATP-dependent protease ATPase subunit HslU (467 aa).

ATP is bound by residues isoleucine 18, 60–65 (GVGKTE), aspartate 280, glutamate 345, and arginine 417.

This sequence belongs to the ClpX chaperone family. HslU subfamily. As to quaternary structure, a double ring-shaped homohexamer of HslV is capped on each side by a ring-shaped HslU homohexamer. The assembly of the HslU/HslV complex is dependent on binding of ATP.

Its subcellular location is the cytoplasm. Its function is as follows. ATPase subunit of a proteasome-like degradation complex; this subunit has chaperone activity. The binding of ATP and its subsequent hydrolysis by HslU are essential for unfolding of protein substrates subsequently hydrolyzed by HslV. HslU recognizes the N-terminal part of its protein substrates and unfolds these before they are guided to HslV for hydrolysis. The protein is ATP-dependent protease ATPase subunit HslU of Lactobacillus helveticus (strain DPC 4571).